The sequence spans 341 residues: Anthranilate phosphoribosyltransferase (341 aa).

5-phospho-alpha-D-ribose 1-diphosphate is bound by residues Gly-79, 82 to 83 (GD), Thr-87, 89 to 92 (NIST), 107 to 115 (KHGNRAVSS), and Ser-119. Gly-79 lines the anthranilate pocket. Ser-91 is a Mg(2+) binding site. Asn-110 lines the anthranilate pocket. Residue Arg-165 participates in anthranilate binding. Residues Asp-224 and Glu-225 each coordinate Mg(2+).

This sequence belongs to the anthranilate phosphoribosyltransferase family. As to quaternary structure, homodimer. Mg(2+) is required as a cofactor.

The enzyme catalyses N-(5-phospho-beta-D-ribosyl)anthranilate + diphosphate = 5-phospho-alpha-D-ribose 1-diphosphate + anthranilate. The protein operates within amino-acid biosynthesis; L-tryptophan biosynthesis; L-tryptophan from chorismate: step 2/5. Catalyzes the transfer of the phosphoribosyl group of 5-phosphorylribose-1-pyrophosphate (PRPP) to anthranilate to yield N-(5'-phosphoribosyl)-anthranilate (PRA). This is Anthranilate phosphoribosyltransferase from Bacillus cereus (strain G9842).